We begin with the raw amino-acid sequence, 504 residues long: MSSLTGKVKGRARKIKGDADIRINESTENVGLVIRVMTAVVDIKFPSGKVPKILNALESKEIYNGKKLVLEVSQHISDSIVRCIALDSTDGLSRNDEFIDTGAPISVPVGRATLGRVFDVLGNPIDNCGPLTKSDYSIKPIYSEVPKLTDQKVTTEILVTGIKVIDLLAPYLKGGKVGLFGGAGVGKTVLIMELIHNIAKAHKGVSVFAGVGERTREGNDLYHEMIESGVINLEEKDKSQAVLVYGQMNEPPGARLRVALSALTMAEYFRDVENQDVLFFVDNIFRFTQSGSEISALLGRIPSAVGYQPTLAAEMGAMQERITSTNRGSITSVQAIYVPADDLTDPAPATSFAHLDSTTVLSRQIAELGIYPAVDPLDSASQALSIDIVGEKHYEVSKEVQRILQTYKSLQDIIAILGMEELSEEDKLIVARARKIQRFLSQPFHVAEVFTGTPGVFVSLEDTVSSFKDIVEGKYDHLPEAAFYMVSNINEAVKKAELLQKEGK.

181-188 (GGAGVGKT) is an ATP binding site.

Belongs to the ATPase alpha/beta chains family. F-type ATPases have 2 components, CF(1) - the catalytic core - and CF(0) - the membrane proton channel. CF(1) has five subunits: alpha(3), beta(3), gamma(1), delta(1), epsilon(1). CF(0) has three main subunits: a(1), b(2) and c(9-12). The alpha and beta chains form an alternating ring which encloses part of the gamma chain. CF(1) is attached to CF(0) by a central stalk formed by the gamma and epsilon chains, while a peripheral stalk is formed by the delta and b chains.

Its subcellular location is the cell inner membrane. The enzyme catalyses ATP + H2O + 4 H(+)(in) = ADP + phosphate + 5 H(+)(out). Its function is as follows. Produces ATP from ADP in the presence of a proton gradient across the membrane. The catalytic sites are hosted primarily by the beta subunits. This Ehrlichia ruminantium (strain Welgevonden) protein is ATP synthase subunit beta.